We begin with the raw amino-acid sequence, 298 residues long: Probable endonuclease 4 (298 aa).

The Zn(2+) site is built by His69, His111, Glu146, Asp180, His183, His215, Asp228, His230, and Glu260.

The protein belongs to the AP endonuclease 2 family. Zn(2+) is required as a cofactor.

It carries out the reaction Endonucleolytic cleavage to 5'-phosphooligonucleotide end-products.. In terms of biological role, endonuclease IV plays a role in DNA repair. It cleaves phosphodiester bonds at apurinic or apyrimidinic (AP) sites, generating a 3'-hydroxyl group and a 5'-terminal sugar phosphate. The protein is Probable endonuclease 4 of Bacillus anthracis (strain A0248).